Reading from the N-terminus, the 75-residue chain is Metallothionein-like protein 1 (75 aa).

Belongs to the metallothionein superfamily. Type 15 family.

Functionally, metallothioneins have a high content of cysteine residues that bind various heavy metals. This is Metallothionein-like protein 1 from Cicer arietinum (Chickpea).